A 418-amino-acid polypeptide reads, in one-letter code: Nuclear hormone receptor family member nhr-209 (418 aa).

Residues 43-121 (PEKCAVCKNA…VGMDSTAIRA (79 aa)) constitute a DNA-binding region (nuclear receptor). NR C4-type zinc fingers lie at residues 46–66 (CAVCKNAAIGYHYNVPSCNGC) and 82–104 (CMNHKNCLDEIESDESQRLCKGC). An NR LBD domain is found at 174-414 (TIPDGFEDMR…SHPPKSLFDE (241 aa)). The segment at 403 to 414 (ECSHPPKSLFDE) is AF-2.

This sequence belongs to the nuclear hormone receptor family.

Its subcellular location is the nucleus. Its function is as follows. Transcriptional regulator. Plays a role in modulation of lifespan and immunity. The chain is Nuclear hormone receptor family member nhr-209 from Caenorhabditis elegans.